Consider the following 119-residue polypeptide: Large ribosomal subunit protein bL17 (119 aa).

Belongs to the bacterial ribosomal protein bL17 family. As to quaternary structure, part of the 50S ribosomal subunit. Contacts protein L32.

The polypeptide is Large ribosomal subunit protein bL17 (Mesoplasma florum (strain ATCC 33453 / NBRC 100688 / NCTC 11704 / L1) (Acholeplasma florum)).